Reading from the N-terminus, the 119-residue chain is Basic phospholipase A2 notechis II-5 (119 aa).

7 cysteine pairs are disulfide-bonded: Cys11–Cys71, Cys27–Cys118, Cys29–Cys45, Cys44–Cys99, Cys51–Cys92, Cys60–Cys85, and Cys78–Cys90. Residues Tyr28, Gly30, and Gly32 each contribute to the Ca(2+) site. Residue His48 is part of the active site. Position 49 (Asp49) interacts with Ca(2+). Asp93 is an active-site residue.

Belongs to the phospholipase A2 family. Group I subfamily. D49 sub-subfamily. It depends on Ca(2+) as a cofactor. In terms of tissue distribution, expressed by the venom gland.

It localises to the secreted. It carries out the reaction a 1,2-diacyl-sn-glycero-3-phosphocholine + H2O = a 1-acyl-sn-glycero-3-phosphocholine + a fatty acid + H(+). Functionally, snake venom phospholipase A2 (PLA2) that inhibits neuromuscular transmission by blocking acetylcholine release from the nerve termini. Notechis II-5 is less toxic than notexin but has a higher specific phospholipase activity. PLA2 catalyzes the calcium-dependent hydrolysis of the 2-acyl groups in 3-sn-phosphoglycerides. This is Basic phospholipase A2 notechis II-5 from Notechis scutatus scutatus (Mainland tiger snake).